The chain runs to 65 residues: Large ribosomal subunit protein bL35 (65 aa).

This sequence belongs to the bacterial ribosomal protein bL35 family.

This Borrelia turicatae (strain 91E135) protein is Large ribosomal subunit protein bL35.